A 120-amino-acid polypeptide reads, in one-letter code: Transcription elongation factor 1 homolog (120 aa).

Zn(2+) is bound by residues C25, C28, C49, and C52. The segment covering 84 to 110 (EDDVVQEEEEEVEEEEEEEEEEDDEDD) has biased composition (acidic residues). Residues 84–120 (EDDVVQEEEEEVEEEEEEEEEEDDEDDHVSVKRKYNF) form a disordered region.

Belongs to the ELOF1 family.

The protein localises to the nucleus. Functionally, transcription elongation factor implicated in the maintenance of proper chromatin structure in actively transcribed regions. In Arabidopsis thaliana (Mouse-ear cress), this protein is Transcription elongation factor 1 homolog.